Reading from the N-terminus, the 252-residue chain is Ribosomal RNA small subunit methyltransferase J (252 aa).

S-adenosyl-L-methionine-binding positions include 101–102 (RD), 117–118 (ER), 153–154 (SS), and Asp171.

The protein belongs to the methyltransferase superfamily. RsmJ family.

It localises to the cytoplasm. The enzyme catalyses guanosine(1516) in 16S rRNA + S-adenosyl-L-methionine = N(2)-methylguanosine(1516) in 16S rRNA + S-adenosyl-L-homocysteine + H(+). Its function is as follows. Specifically methylates the guanosine in position 1516 of 16S rRNA. In Pseudoalteromonas translucida (strain TAC 125), this protein is Ribosomal RNA small subunit methyltransferase J.